The sequence spans 314 residues: Aspartate carbamoyltransferase catalytic subunit (314 aa).

Carbamoyl phosphate contacts are provided by arginine 55 and threonine 56. Residue lysine 83 participates in L-aspartate binding. Residues arginine 105, histidine 139, and glutamine 142 each contribute to the carbamoyl phosphate site. Positions 172 and 226 each coordinate L-aspartate. Positions 267 and 268 each coordinate carbamoyl phosphate.

Belongs to the aspartate/ornithine carbamoyltransferase superfamily. ATCase family. Heterododecamer (2C3:3R2) of six catalytic PyrB chains organized as two trimers (C3), and six regulatory PyrI chains organized as three dimers (R2).

The enzyme catalyses carbamoyl phosphate + L-aspartate = N-carbamoyl-L-aspartate + phosphate + H(+). It participates in pyrimidine metabolism; UMP biosynthesis via de novo pathway; (S)-dihydroorotate from bicarbonate: step 2/3. In terms of biological role, catalyzes the condensation of carbamoyl phosphate and aspartate to form carbamoyl aspartate and inorganic phosphate, the committed step in the de novo pyrimidine nucleotide biosynthesis pathway. This chain is Aspartate carbamoyltransferase catalytic subunit, found in Rhodococcus jostii (strain RHA1).